The sequence spans 243 residues: uncharacterized protein (243 aa).

The Bipartite nuclear localization signal motif lies at 207–224 (KKTSISGYKTLDVKRKFV).

This is an uncharacterized protein from Acheta domesticus (House cricket).